The chain runs to 648 residues: Transcription termination factor FttA (648 aa).

The tract at residues 1 to 179 is not required for dimerization, required for cleavage at some sites; that stretch reads MIKRETQVDQ…QVGRNIYRKP (179 aa). Residues 9 to 76 form a KHa region; it reads DQILKDIRGI…ISIRPDPDVL (68 aa). The tract at residues 77 to 144 is KHb; the sequence is LPPEEAEKLI…WAPKVVRTPP (68 aa). Residues 185–395 are metallo-beta-lactamase N-terminus; that stretch reads WIRITGLGGF…LVMESTYGGA (211 aa). Zn(2+) contacts are provided by H253, H255, D257, H258, H341, and D364. The segment at 396 to 589 is beta-Casp; the sequence is NDIQMPREEA…MEVHTIDGFS (194 aa). A metallo-beta-lactamase C-terminus region spans residues 590 to 648; the sequence is GHADRRELMNYVAKVRPRPERVITVHGEPQKCLDLATSIHRKFGLSTRAPNNLDTIRLR. H615 is a Zn(2+) binding site.

Belongs to the metallo-beta-lactamase superfamily. RNA-metabolizing metallo-beta-lactamase-like family. FttA subfamily. Homodimer. Interacts with RNA polymerase (RNAP), interacts with the Spt4-Spt5 complex. Zn(2+) is required as a cofactor.

EndoRNase activity is inhibited by 1,10-phenanthroline. Functionally, terminates transcription on the whole genome. Termination is linked to FttA-mediated RNA cleavage and does not require NTP hydrolysis. Cleaves endonucleolytically at the RNA exit channel of RNA polymerase (RNAP); the 5'-3' exonuclease activity of this protein degrades the nascent RNA released from RNAP. In terms of biological role, a single-stranded endoribonuclease (endoRNase) with a preference for cleavage at CA dinucleotides. Has 5'-3' exoribonuclease (exoRNase) activity on 5'-monophosphorylated RNA; this activity does not occur on 5'-tri-phosphorylated or 5'-OH substrates. Also has weak activity 5'-3' exodeoxyribonuclease activity on ssDNA. The polypeptide is Transcription termination factor FttA (Pyrococcus abyssi (strain GE5 / Orsay)).